Consider the following 293-residue polypeptide: Bifunctional protein FolD (293 aa).

NADP(+) is bound by residues 164–166 (GRS), Ser-193, and Thr-234.

It belongs to the tetrahydrofolate dehydrogenase/cyclohydrolase family. As to quaternary structure, homodimer.

It catalyses the reaction (6R)-5,10-methylene-5,6,7,8-tetrahydrofolate + NADP(+) = (6R)-5,10-methenyltetrahydrofolate + NADPH. The catalysed reaction is (6R)-5,10-methenyltetrahydrofolate + H2O = (6R)-10-formyltetrahydrofolate + H(+). The protein operates within one-carbon metabolism; tetrahydrofolate interconversion. Catalyzes the oxidation of 5,10-methylenetetrahydrofolate to 5,10-methenyltetrahydrofolate and then the hydrolysis of 5,10-methenyltetrahydrofolate to 10-formyltetrahydrofolate. The protein is Bifunctional protein FolD of Bacteroides fragilis (strain ATCC 25285 / DSM 2151 / CCUG 4856 / JCM 11019 / LMG 10263 / NCTC 9343 / Onslow / VPI 2553 / EN-2).